Here is a 307-residue protein sequence, read N- to C-terminus: Glycine--tRNA ligase alpha subunit (307 aa).

The protein belongs to the class-II aminoacyl-tRNA synthetase family. In terms of assembly, tetramer of two alpha and two beta subunits.

It localises to the cytoplasm. It catalyses the reaction tRNA(Gly) + glycine + ATP = glycyl-tRNA(Gly) + AMP + diphosphate. In Levilactobacillus brevis (strain ATCC 367 / BCRC 12310 / CIP 105137 / JCM 1170 / LMG 11437 / NCIMB 947 / NCTC 947) (Lactobacillus brevis), this protein is Glycine--tRNA ligase alpha subunit.